Here is a 453-residue protein sequence, read N- to C-terminus: Venom prothrombin activator notecarin-D2 (453 aa).

The first 20 residues, 1-20, serve as a signal peptide directing secretion; that stretch reads MAPQLLLCLILTFLWSLPEA. A propeptide spanning residues 21–40 is cleaved from the precursor; that stretch reads ESNVFLKSKVANRFLQRTKR. The 46-residue stretch at 41–86 folds into the Gla domain; sequence SNSLFEEIRPGNIERECIEEKCSKEEAREVFEDNEKTETFWNVYVD. Residues Glu46, Glu47, Glu54, Glu56, Glu59, Glu60, Glu65, Glu66, Glu69, Glu72, and Glu75 each carry the 4-carboxyglutamate modification. Cys57 and Cys62 are disulfide-bonded. The EGF-like 1; calcium-binding domain occupies 86–122; the sequence is DGDQCSSNPCHYRGTCKDGIGSYTCTCLPNYEGKNCE. 11 disulfides stabilise this stretch: Cys90–Cys101, Cys95–Cys110, Cys112–Cys121, Cys129–Cys140, Cys136–Cys149, Cys151–Cys164, Cys172–Cys326, Cys216–Cys221, Cys236–Cys252, Cys374–Cys388, and Cys399–Cys427. A glycan (O-linked (Hex...) serine) is linked at Ser92. The EGF-like 2 domain maps to 129-164; that stretch reads CRAFNGNCWHFCKRVQSETQCSCAESYLLGVDGHSC. Residues 182 to 209 constitute a propeptide, activation peptide; the sequence is REASLPDFVQSQKATVLKKSDNPSPDIR. In terms of domain architecture, Peptidase S1 spans 210–451; it reads IVNGMDCKLG…FIPWIKKIMS (242 aa). His251 serves as the catalytic Charge relay system. An N-linked (GlcNAc...) asparagine glycan is attached at Asn254. Asp306 (charge relay system) is an active-site residue. The active-site Charge relay system is the Ser403.

Belongs to the peptidase S1 family. Snake venom subfamily. In terms of assembly, heterodimer of a light chain and a heavy chain; disulfide-linked. Post-translationally, gamma-carboxyglutamate residues are formed by vitamin K dependent carboxylation. These residues are essential for the binding of calcium. As to expression, expressed by the venom gland.

It localises to the secreted. It catalyses the reaction Selective cleavage of Arg-|-Thr and then Arg-|-Ile bonds in prothrombin to form thrombin.. Functionally, snake prothrombin activator that attacks the hemostatic system of prey. This protein is functionally similar to blood coagulation factor Xa. This chain is Venom prothrombin activator notecarin-D2, found in Notechis scutatus scutatus (Mainland tiger snake).